The chain runs to 394 residues: Elongation factor Tu 1 (394 aa).

Positions 10-204 (KPHVNVGTIG…ALDSYIPEPQ (195 aa)) constitute a tr-type G domain. Residues 19-26 (GHVDHGKT) form a G1 region. 19–26 (GHVDHGKT) serves as a coordination point for GTP. Residue Thr26 participates in Mg(2+) binding. Residues 60 to 64 (GITIS) form a G2 region. The G3 stretch occupies residues 81-84 (DCPG). GTP is bound by residues 81–85 (DCPGH) and 136–139 (NKCD). The interval 136 to 139 (NKCD) is G4. The G5 stretch occupies residues 174 to 176 (SAL).

It belongs to the TRAFAC class translation factor GTPase superfamily. Classic translation factor GTPase family. EF-Tu/EF-1A subfamily. In terms of assembly, monomer.

It localises to the cytoplasm. It catalyses the reaction GTP + H2O = GDP + phosphate + H(+). In terms of biological role, GTP hydrolase that promotes the GTP-dependent binding of aminoacyl-tRNA to the A-site of ribosomes during protein biosynthesis. The chain is Elongation factor Tu 1 from Pseudoalteromonas translucida (strain TAC 125).